We begin with the raw amino-acid sequence, 282 residues long: Complement component 1 Q subcomponent-binding protein, mitochondrial (282 aa).

Residues 1 to 73 (MLPLLRCVPR…PCACGCGCGS (73 aa)) constitute a mitochondrion transit peptide. The tract at residues 76-93 (TDGDKAFVDFLSDEIKEE) is C1q binding. Serine 87 carries the phosphoserine modification. Lysine 91 carries the N6-acetyllysine modification. Residues 138–164 (SIPPTFDGEEEPSQGQKVEEQEPELTS) are disordered. An interaction with MAVS region spans residues 168-213 (FVVEVIKNDDGKKALVLDCHYPEDEVGQEDEAESDIFSIREVSFQS). Tyrosine 188 is modified (phosphotyrosine). Residues serine 201 and serine 205 each carry the phosphoserine modification. A Phosphothreonine modification is found at threonine 214.

Belongs to the MAM33 family. As to quaternary structure, homotrimer; three monomers form a donut-shaped structure with an unusually asymmetric charge distribution on the surface. Interacts with CDK13, HRK, VTN, NFYB, ADRA1B, FOXC1, DDX21, DDX50, NCL, SRSF1, SRSF9 and CDKN2A isoform smARF. Interacts with CD93; the association may represent a cell surface C1q receptor. Interacts with KRT1; the association represents a cell surface kininogen receptor. Interacts with CD209; the interaction is indicative for a C1q:C1QBP:CD209 signaling complex. Interacts with FBL and RRP1; the respective interactions with C1QBP are competitive. Probably associates with the mitoribosome. Interacts with MAVS; the interaction occurs upon viral transfection. Interacts with PPIF. Interacts with U2AF1L4. Interacts with PLEKHN1. Interacts with VGF-derived peptide TLQP-21. Interacts with POLGARF which is produced from an alternative reading frame of the POLG gene; the interaction results in nucleolar localization of C1QBP, probably due to prevention of C1QBP maturation and redirection from mitochondria to nucleoli. Interacts with MRE11 and RAD50; forming the MRC (MRE11-RAD50-C1QBP) complex that inhibits the activity of MRE11. In terms of assembly, (Microbial infection) Interacts with Rubella virus capsid protein; the interaction occurs in mitochondria. Interacts with Rubella virus protease/methyltransferase p150. (Microbial infection) Interacts with Staphylococcus aureus protein A/spa. As to quaternary structure, (Microbial infection) Interacts with Staphylococcus aureus protein A/spa, HIV-1 Tat and HCV core protein. In terms of assembly, (Microbial infection) Interacts with HIV-1 Tat and HCV core protein. (Microbial infection) Interacts with L.monocytogenes internalin B. As to quaternary structure, (Microbial infection) Interacts with Epstein-Barr virus EBNA1. As to expression, expressed on cell surface of peripheral blood cells (at protein level); Surface expression is reported for macrophages and monocyte-derived dendritic cells.

Its subcellular location is the mitochondrion matrix. It localises to the nucleus. The protein resides in the nucleolus. It is found in the cell membrane. The protein localises to the secreted. Its subcellular location is the cytoplasm. In terms of biological role, multifunctional and multicompartmental protein involved in inflammation and infection processes, ribosome biogenesis, protein synthesis in mitochondria, regulation of apoptosis, transcriptional regulation and pre-mRNA splicing. At the cell surface is thought to act as an endothelial receptor for plasma proteins of the complement and kallikrein-kinin cascades. Putative receptor for C1q; specifically binds to the globular 'heads' of C1q thus inhibiting C1; may perform the receptor function through a complex with C1qR/CD93. In complex with cytokeratin-1/KRT1 is a high affinity receptor for kininogen-1/HMWK. Can also bind other plasma proteins, such as coagulation factor XII leading to its autoactivation. May function to bind initially fluid kininogen-1 to the cell membrane. The secreted form may enhance both extrinsic and intrinsic coagulation pathways. It is postulated that the cell surface form requires docking with transmembrane proteins for downstream signaling which might be specific for a cell-type or response. By acting as C1q receptor is involved in chemotaxis of immature dendritic cells and neutrophils and is proposed to signal through CD209/DC-SIGN on immature dendritic cells, through integrin alpha-4/beta-1 during trophoblast invasion of the decidua, and through integrin beta-1 during endothelial cell adhesion and spreading. Signaling involved in inhibition of innate immune response is implicating the PI3K-AKT/PKB pathway. Required for protein synthesis in mitochondria. In mitochondrial translation may be involved in formation of functional 55S mitoribosomes; the function seems to involve its RNA-binding activity. Acts as a RNA modification reader, which specifically recognizes and binds mitochondrial RNAs modified by C5-methylcytosine (m5C) in response to stress, and promotes recruitment of the mitochondrial degradosome complex, leading to their degradation. May be involved in the nucleolar ribosome maturation process; the function may involve the exchange of FBL for RRP1 in the association with pre-ribosome particles. Involved in regulation of RNA splicing by inhibiting the RNA-binding capacity of SRSF1 and its phosphorylation. Is required for the nuclear translocation of splicing factor U2AF1L4. Involved in regulation of CDKN2A- and HRK-mediated apoptosis. Stabilizes mitochondrial CDKN2A isoform smARF. May be involved in regulation of FOXC1 transcriptional activity and NFY/CCAAT-binding factor complex-mediated transcription. May play a role in antibacterial defense as it can bind to cell surface hyaluronan and inhibit Streptococcus pneumoniae hyaluronate lyase. May be involved in modulation of the immune response; ligation by HCV core protein is resulting in suppression of interleukin-12 production in monocyte-derived dendritic cells. Involved in regulation of antiviral response by inhibiting RIGI- and IFIH1-mediated signaling pathways probably involving its association with MAVS after viral infection. Acts as a regulator of DNA repair via homologous recombination by inhibiting the activity of MRE11: interacts with unphosphorylated MRE11 and RAD50 in absence of DNA damage, preventing formation and activity of the MRN complex. Following DNA damage, dissociates from phosphorylated MRE11, allowing formation of the MRN complex. Functionally, (Microbial infection) Involved in HIV-1 replication, presumably by contributing to splicing of viral RNA. (Microbial infection) In infection processes acts as an attachment site for microbial proteins, including Listeria monocytogenes internalin B (InlB) and Staphylococcus aureus protein A. Its function is as follows. (Microbial infection) Involved in replication of Rubella virus. In Homo sapiens (Human), this protein is Complement component 1 Q subcomponent-binding protein, mitochondrial (C1QBP).